The chain runs to 200 residues: 3-isopropylmalate dehydratase small subunit 2 (200 aa).

It belongs to the LeuD family. LeuD type 1 subfamily. Heterodimer of LeuC and LeuD.

It catalyses the reaction (2R,3S)-3-isopropylmalate = (2S)-2-isopropylmalate. It participates in amino-acid biosynthesis; L-leucine biosynthesis; L-leucine from 3-methyl-2-oxobutanoate: step 2/4. In terms of biological role, catalyzes the isomerization between 2-isopropylmalate and 3-isopropylmalate, via the formation of 2-isopropylmaleate. This Mannheimia succiniciproducens (strain KCTC 0769BP / MBEL55E) protein is 3-isopropylmalate dehydratase small subunit 2.